Consider the following 444-residue polypeptide: Aflatoxin biosynthesis regulatory protein (444 aa).

The segment at 1–26 is disordered; the sequence is MVDHISPRASPGPIRSSQTRRARKLR. The segment at residues 29–56 is a DNA-binding region (zn(2)-C6 fungal-type); sequence CTSCASSKVRCTKEKPACARCIERGLAC. Residues 64–167 form a disordered region; the sequence is MGRNPRAPSP…QGLGGDLAGQ (104 aa). Residues 106–116 show a composition bias toward basic residues; the sequence is TQAHTHAHSHP. Residues 120–130 are compositionally biased toward low complexity; the sequence is PQSHPQSNQPP. Residues 136–149 are compositionally biased toward polar residues; it reads PNGSSSVSAIFSHQ.

The protein localises to the nucleus. It participates in mycotoxin biosynthesis; aflatoxin biosynthesis. In terms of biological role, involved in the regulation of aflatoxin biosynthesis. May have a role in nitrate assimilation and sclerotial morphogenesis. The chain is Aflatoxin biosynthesis regulatory protein (aflR) from Aspergillus parasiticus.